The sequence spans 1233 residues: MEESPPKQKSNTKVAQHEGQQDLNTTRHMNVELKHRPKLERHLKLGMIPVVYMKQGEEILYPAQSLREENLIQNFTSLLLLQKLCPKDPENMIRKSWASCVPEEGGHMINIQDLFGPNIGTQKEPQLVIIEGAAGIGKSTLARLVKRAWKEGQLYRDHFQHVFFFSCRELAQCKKLSLAELIAQGQEVPTAPINQILSHPEKLLFILDGIDEPAWVLADQNPELCLHWSQRQPVHTLLGSLLGKSILPEAFFLLTTRTTALQKFIPSLPMPCQVEVLGFSGIERENYFYKYFANQRHAITAFMMVESNPVLLTLCEVPWVCWLVCTCLKKQMEQGRVLSLKSQTTTALCLKYLSLTIPDKHRRTQVKALCSLAAEGIWKRRTLFSESDLCKQGLDEDAVATFLKTGVLQKQASSLSYSFAHLCLQEFFAAISCILEDSEERHGNMEMDRIVETLVERYGRQNLFEAPTVRFLFGLLGKEGVKGMEKLFSCSLHGKTNLKLLWHILVKSQPHQPPCLGLLHCLYENQDMELLTHVMHDLQGTIVPGPNDTAHTVLQTNVKHLVVQTDMELMVATFCIQFYCHVRTLQLNMEKQQGYALISPRMVLYRWTPITNASWEILFYNLKFTRNLEGLDLSGNSLRYSVVQSLCNTLRYPGCQLKTLWLVKCGLTSRYCSLLASVLSAHSSLTELYLQLNDLGDDGVRMLCEGLRNPVCNLSILWLDLSSLSAQVITELRTLEEKNPKLYIRSIWMPHMMVPTENMDEEAILTTLKQQRQESGDKPMEILGTEEDFWGPTGPVATELVDRVRNLYRMPQMMVPTENMDEEDILTSFKQQRQQSGANPMEILGTEEDFWGPIGPVATEVVYRERNLYRVQLPMAGSYHCPSTRLHFVVTRAVTIEIEFCAWSQFLDKTPLQQSHMVVGPLFDIKAEQGAVTAVYLPHFVSLKDTKASTFDFKVAHFQEHGMVLETPDRVKPGYTVLKNPSFSPMGVVLRIIPAARHFIPITSITLIYYRVNQEEVTLHLYLVPNDCTIQKAIDDEEMKFQFVRINKPPPVDNLFIGSRYIVSGSENLEITPKELELCYRSSKEFQLFSEIYVGNMGSEIKLQIKNKKHMKLIWEALLKPGDLRPALPRIAQALKDAPSLLHFMDQHREQLVARVTSVDPLLDKLHGLVLNEESYEAVRAENTNQDKMRKLFNLSRSWSRACKDLFYQALKETHPHLVMDLLEKSGGVSLGS.

A disordered region spans residues 1 to 22 (MEESPPKQKSNTKVAQHEGQQD). The 310-residue stretch at 126–435 (QLVIIEGAAG…EFFAAISCIL (310 aa)) folds into the NACHT domain. Residue 132-139 (GAAGIGKS) coordinates ATP. 2 LRR repeats span residues 627–647 (NLEGLDLSGNSLRYSVVQSLC) and 684–704 (SLTELYLQLNDLGDDGVRMLC). A ZU5 region spans residues 850–983 (FWGPIGPVAT…GYTVLKNPSF (134 aa)). In terms of domain architecture, FIIND spans 850–1133 (FWGPIGPVAT…LRPALPRIAQ (284 aa)). Positions 984–1133 (SPMGVVLRII…LRPALPRIAQ (150 aa)) are UPA. Residues 1143–1226 (HFMDQHREQL…HLVMDLLEKS (84 aa)) form the CARD domain.

This sequence belongs to the NLRP family. In terms of assembly, interacts with DPP9; leading to inhibit activation of the inflammasome. DPP9 acts via formation of a ternary complex, composed of a DPP9 homodimer, one full-length Nlrp1b protein, and one cleaved C-terminus of Nlrp1b (NACHT, LRR and PYD domains-containing protein 1b, C-terminus). Interacts with DPP8; leading to inhibit activation of the inflammasome, probably via formation of a ternary complex with DPP8. Interacts (via LRR repeats) with BCL2 and BCL2L1 (via the loop between motifs BH4 and BH3). Interacts with NOD2; this interaction may increase IL1B release. Interacts with EIF2AK2/PKR; this interaction requires EIF2AK2 activity, is accompanied by EIF2AK2 autophosphorylation and promotes inflammasome assembly in response to B.anthracis lethal toxin. Interacts with MEFV; this interaction targets Nlrp1b to degradation by autophagy, hence preventing excessive IL1B- and IL18-mediated inflammation. As to quaternary structure, interacts with the C-terminal part of Nlrp1b (NACHT, LRR and PYD domains-containing protein 1b, C-terminus) in absence of pathogens and other damage-associated signals. Interacts with the N-terminal part of Nlrp1b (NACHT, LRR and PYD domains-containing protein 1b, N-terminus) in absence of pathogens and other damage-associated signals. Homomultimer; forms the Nlrp1b inflammasome polymeric complex, a filament composed of homopolymers of this form in response to pathogens and other damage-associated signals. The Nlrp1b inflammasome polymeric complex directly recruits pro-caspase-1 (proCASP1) independently of PYCARD/ASC. Interacts (via CARD domain) with CASP1 (via CARD domain); leading to CASP1 activation. In terms of processing, autocatalytically cleaved. Autocatalytic cleavage in FIIND region occurs constitutively, prior to activation signals, and is required for inflammasome activity (IL1B release), possibly by facilitating CASP1 binding. Both N- and C-terminal parts remain associated non-covalently. Ubiquitinated by UBR2, a component of the N-end rule pathway in response to pathogens and other damage-associated signals, leading to its degradation by the proteasome and subsequent release of the cleaved C-terminal part of the protein (NACHT, LRR and PYD domains-containing protein 1b, C-terminus), which polymerizes and forms the Nlrp1b inflammasome. Post-translationally, (Microbial infection) Cleavage by B.anthracis lethal toxin (LT) endopeptidase promotes ubiquitination and degradation of the N-terminal part, releasing the cleaved C-terminal part of the protein (NACHT, LRR and PYD domains-containing protein 1b, C-terminus), which polymerizes and forms the Nlrp1b inflammasome. In terms of processing, (Microbial infection) Ubiquitinated by S.flexneri IpaH7.8, leading to its degradation by the proteasome and subsequent release of the cleaved C-terminal part of the protein (NACHT, LRR and PYD domains-containing protein 1b, C-terminus), which polymerizes and forms the Nlrp1b inflammasome. Widely expressed, including in macrophages.

It localises to the cytoplasm. It is found in the cytosol. The protein resides in the membrane. The protein localises to the inflammasome. Its activity is regulated as follows. Activated by cleavage by B.anthracis lethal toxin (LT) endopeptidase: cleavage by LT promotes ubiquitination and degradation of the N-terminal part, releasing the cleaved C-terminal part of the protein (NACHT, LRR and PYD domains-containing protein 1b, C-terminus), which polymerizes and forms the Nlrp1b inflammasome. Activated by S.flexneri IpaH7.8, an E3 ubiquitin ligase that mediates ubiquitination and degradation of the N-terminal part, releasing the cleaved C-terminal part of the protein, which polymerizes and forms the Nlrp1b inflammasome. Nlrp1b inflammasome is inhibited by DPP8 and DPP9, which sequester the C-terminal fragment of Nlrp1b (NACHT, LRR and PYD domains-containing protein 1b, C-terminus) in a ternary complex, thereby preventing Nlrp1b oligomerization and activation. Nlrp1b inflammasome is activated by Val-boroPro (Talabostat, PT-100), an inhibitor of dipeptidyl peptidases DPP8 and DPP9. Val-boroPro relieves inhibition of DPP8 and/or DPP9 by promoting disruption of the ternary complex, releasing its C-terminal part from autoinhibition. Activated by metabolic inhibitors, such as 2-deoxy-D-glucose and sodium azide, by nutrient deprivation and hypoxia, possibly due to a decrease in cytosolic ATP. Also activated by Toxoplasma gondii. Not activated by muramyl dipeptide, nor by full-length bacterial peptidoglycan. Contrary to its human ortholog, not activated by positive-strand RNA virus such as Semliki Forrest virus or long dsRNA. Its function is as follows. Acts as the sensor component of the Nlrp1b inflammasome, which mediates inflammasome activation in response to various pathogen-associated signals, leading to subsequent pyroptosis. Inflammasomes are supramolecular complexes that assemble in the cytosol in response to pathogens and other damage-associated signals and play critical roles in innate immunity and inflammation. Acts as a recognition receptor (PRR): recognizes specific pathogens and other damage-associated signals, such as B.anthracis lethal toxin (LT) or Val-boroPro inhibitor, and mediates the formation of the inflammasome polymeric complex. In response to pathogen-associated signals, the N-terminal part of Nlrp1b is degraded by the proteasome, releasing the cleaved C-terminal part of the protein (NACHT, LRR and PYD domains-containing protein 1b, C-terminus), which polymerizes to initiate the formation of the inflammasome complex: the inflammasome directly recruits pro-caspase-1 (proCASP1) independently of PYCARD/ASC and promotes caspase-1 (CASP1) activation, which subsequently cleaves and activates inflammatory cytokines IL1B and IL18 and gasdermin-D (GSDMD), leading to pyroptosis. In the absence of GSDMD expression, the Nlrp1b inflammasome is able to recruit and activate CASP8, leading to activation of gasdermin-E (GSDME). Activation of Nlrp1b inflammasome is also required for HMGB1 secretion; the active cytokines and HMGB1 stimulate inflammatory responses. Primary mediator of macrophage susceptibility to B.anthracis LT: in response to B.anthracis infection, macrophages and dendritic cells release IL1B and undergo pyroptosis. This early inflammatory response to the toxin increases resistance to infection by B.anthracis spores. Functionally, constitutes the precursor of the Nlrp1b inflammasome, which mediates autoproteolytic processing within the FIIND domain to generate the N-terminal and C-terminal parts, which are associated non-covalently in absence of pathogens and other damage-associated signals. In terms of biological role, regulatory part that prevents formation of the Nlrp1b inflammasome: in absence of pathogens and other damage-associated signals, interacts with the C-terminal part of Nlrp1b (NACHT, LRR and PYD domains-containing protein 1b, C-terminus), preventing activation of the Nlrp1b inflammasome. In response to pathogen-associated signals, this part is ubiquitinated by the N-end rule pathway and degraded by the proteasome, releasing the cleaved C-terminal part of the protein, which polymerizes and forms the Nlrp1b inflammasome. Constitutes the active part of the Nlrp1b inflammasome. In absence of pathogens and other damage-associated signals, interacts with the N-terminal part of Nlrp1b (NACHT, LRR and PYD domains-containing protein 1b, N-terminus), preventing activation of the Nlrp1b inflammasome. In response to pathogen-associated signals, the N-terminal part of Nlrp1b is degraded by the proteasome, releasing this form, which polymerizes to form the Nlrp1b inflammasome complex: the Nlrp1b inflammasome complex then directly recruits pro-caspase-1 (proCASP1) and promotes caspase-1 (CASP1) activation, leading to gasdermin-D (GSDMD) cleavage and subsequent pyroptosis. This is NACHT, LRR and PYD domains-containing protein 1b allele 1 from Mus musculus (Mouse).